Consider the following 160-residue polypeptide: Cytochrome b6-f complex subunit 4 (160 aa).

The next 3 membrane-spanning stretches (helical) occupy residues L36–V56, L95–E115, and T131–I151.

The protein belongs to the cytochrome b family. PetD subfamily. In terms of assembly, the 4 large subunits of the cytochrome b6-f complex are cytochrome b6, subunit IV (17 kDa polypeptide, petD), cytochrome f and the Rieske protein, while the 4 small subunits are petG, petL, petM and petN. The complex functions as a dimer.

The protein localises to the plastid. Its subcellular location is the chloroplast thylakoid membrane. Functionally, component of the cytochrome b6-f complex, which mediates electron transfer between photosystem II (PSII) and photosystem I (PSI), cyclic electron flow around PSI, and state transitions. The sequence is that of Cytochrome b6-f complex subunit 4 from Sorghum bicolor (Sorghum).